Reading from the N-terminus, the 1132-residue chain is APC membrane recruitment protein 1 (1132 aa).

M1 carries the post-translational modification N-acetylmethionine. Polar residues predominate over residues 1-21 (MESQQDEAVQTKGASTSSDAQ). Disordered stretches follow at residues 1–256 (MESQ…ACKN), 268–301 (FMQP…NPPN), 338–423 (SMTD…GEEN), 469–505 (GLGE…DSGE), 674–699 (TSGG…EPDW), 736–770 (MQEA…GNAT), 924–949 (ELQA…DSPL), and 1038–1132 (SQAS…NLAK). A compositionally biased stretch (basic and acidic residues) spans 24 to 35 (GAEKGAKNKTTE). Over residues 121–133 (SKSSAQFPSSQSA) the composition is skewed to low complexity. 3 stretches are compositionally biased toward basic and acidic residues: residues 195–208 (KELE…HEHV), 218–229 (EIFRDTRKENAK), and 281–290 (EEPHTSETEG). The span at 372-423 (ALPDDDDNDDEEEEEEEEEEEEEEEEEEEEEEEEEEEELLEDEEEVKDGEEN) shows a compositional bias: acidic residues. Composition is skewed to polar residues over residues 475–486 (TPQSDQQESAPN) and 677–696 (GSQT…SSSE). Acidic residues-rich tracts occupy residues 756-765 (EEPEEEEEEK) and 931-941 (DSDEEGEEEEG). Composition is skewed to polar residues over residues 1059 to 1072 (SCSS…QSQA) and 1115 to 1132 (ASLS…NLAK).

The protein belongs to the Amer family. Interacts with CTNNB1, AXIN1, LRP6, KEAP1, APC and BTRC. Interacts with SCF (SKP1-CUL1-F-box protein) E3 ubiquitin-protein ligase complexes containing BTRC and/or FBXW11. Identified in the beta-catenin destruction complex containing CTNNB1, APC, AXIN1 and AXIN2. Interacts with WT1. In terms of tissue distribution, expressed in kidney.

The protein localises to the cytoplasm. The protein resides in the cell membrane. It localises to the nucleus. Functionally, regulator of the canonical Wnt signaling pathway. Acts by specifically binding phosphatidylinositol 4,5-bisphosphate (PtdIns(4,5)P2), translocating to the cell membrane and interacting with key regulators of the canonical Wnt signaling pathway, such as components of the beta-catenin destruction complex. Acts both as a positive and negative regulator of the Wnt signaling pathway, depending on the context: acts as a positive regulator by promoting LRP6 phosphorylation. Also acts as a negative regulator by acting as a scaffold protein for the beta-catenin destruction complex and promoting stabilization of Axin at the cell membrane. Promotes CTNNB1 ubiquitination and degradation. Involved in kidney development. This is APC membrane recruitment protein 1 (Amer1) from Mus musculus (Mouse).